Here is a 276-residue protein sequence, read N- to C-terminus: Diaminopimelate epimerase (276 aa).

The substrate site is built by N13, Q46, and N66. The active-site Proton donor is the C75. Substrate contacts are provided by residues 76-77, N159, N192, and 210-211; these read GN and ER. C219 (proton acceptor) is an active-site residue. 220-221 is a substrate binding site; sequence GT.

It belongs to the diaminopimelate epimerase family. In terms of assembly, homodimer.

It is found in the cytoplasm. It catalyses the reaction (2S,6S)-2,6-diaminopimelate = meso-2,6-diaminopimelate. Its pathway is amino-acid biosynthesis; L-lysine biosynthesis via DAP pathway; DL-2,6-diaminopimelate from LL-2,6-diaminopimelate: step 1/1. Its function is as follows. Catalyzes the stereoinversion of LL-2,6-diaminopimelate (L,L-DAP) to meso-diaminopimelate (meso-DAP), a precursor of L-lysine and an essential component of the bacterial peptidoglycan. This is Diaminopimelate epimerase from Hahella chejuensis (strain KCTC 2396).